A 103-amino-acid chain; its full sequence is Large ribosomal subunit protein P2 (103 aa).

Residues 64-103 are disordered; the sequence is LAISSSQKSEPAQPADTAESTQATENKEEEDEDFDIFAAF. Acidic residues predominate over residues 90–103; the sequence is KEEEDEDFDIFAAF.

The protein belongs to the eukaryotic ribosomal protein P1/P2 family. Component of the large ribosomal subunit.

The protein localises to the cytoplasm. Functionally, plays an important role in the elongation step of protein synthesis. The protein is Large ribosomal subunit protein P2 (RPP2A) of Encephalitozoon cuniculi (strain GB-M1) (Microsporidian parasite).